The chain runs to 157 residues: MKKIILAGGCFWGVEEFLSRINGVVSTEVGYANGRTENPTYEDICTKNTYFAEVCLVNYDENIISLKELLAKFWTIIDPTSLNKQGNDVGSQYRTGIYYVDSSDLEDILNSKEELQKSYSKKIVTEVKPLENYYKAEEYHQKYLKKNPNGYCHIKLD.

Cysteine 10 is a catalytic residue.

The protein belongs to the MsrA Met sulfoxide reductase family.

The enzyme catalyses L-methionyl-[protein] + [thioredoxin]-disulfide + H2O = L-methionyl-(S)-S-oxide-[protein] + [thioredoxin]-dithiol. The catalysed reaction is [thioredoxin]-disulfide + L-methionine + H2O = L-methionine (S)-S-oxide + [thioredoxin]-dithiol. Functionally, has an important function as a repair enzyme for proteins that have been inactivated by oxidation. Catalyzes the reversible oxidation-reduction of methionine sulfoxide in proteins to methionine. This is Peptide methionine sulfoxide reductase MsrA from Clostridium perfringens (strain 13 / Type A).